The primary structure comprises 407 residues: Nicotinate phosphoribosyltransferase (407 aa).

Residue His224 is modified to Phosphohistidine; by autocatalysis.

Belongs to the NAPRTase family. In terms of processing, transiently phosphorylated on a His residue during the reaction cycle. Phosphorylation strongly increases the affinity for substrates and increases the rate of nicotinate D-ribonucleotide production. Dephosphorylation regenerates the low-affinity form of the enzyme, leading to product release.

The catalysed reaction is nicotinate + 5-phospho-alpha-D-ribose 1-diphosphate + ATP + H2O = nicotinate beta-D-ribonucleotide + ADP + phosphate + diphosphate. It participates in cofactor biosynthesis; NAD(+) biosynthesis; nicotinate D-ribonucleotide from nicotinate: step 1/1. Functionally, catalyzes the synthesis of beta-nicotinate D-ribonucleotide from nicotinate and 5-phospho-D-ribose 1-phosphate at the expense of ATP. The polypeptide is Nicotinate phosphoribosyltransferase (Pseudomonas syringae pv. tomato (strain ATCC BAA-871 / DC3000)).